The following is a 231-amino-acid chain: Large ribosomal subunit protein uL1 (231 aa).

Belongs to the universal ribosomal protein uL1 family. As to quaternary structure, part of the 50S ribosomal subunit.

Functionally, binds directly to 23S rRNA. The L1 stalk is quite mobile in the ribosome, and is involved in E site tRNA release. Protein L1 is also a translational repressor protein, it controls the translation of the L11 operon by binding to its mRNA. The polypeptide is Large ribosomal subunit protein uL1 (Thioalkalivibrio sulfidiphilus (strain HL-EbGR7)).